The primary structure comprises 247 residues: Adenosylcobinamide-GDP ribazoletransferase (247 aa).

6 consecutive transmembrane segments (helical) span residues 34 to 54, 59 to 79, 113 to 133, 138 to 158, 171 to 193, and 197 to 219; these read IVMF…IFIL, CGIP…TGGF, GGLA…ELAL, MLAA…LLMY, VFIG…IIAT, and PGMQ…GQLL.

The protein belongs to the CobS family. Mg(2+) is required as a cofactor.

It localises to the cell inner membrane. It carries out the reaction alpha-ribazole + adenosylcob(III)inamide-GDP = adenosylcob(III)alamin + GMP + H(+). The catalysed reaction is alpha-ribazole 5'-phosphate + adenosylcob(III)inamide-GDP = adenosylcob(III)alamin 5'-phosphate + GMP + H(+). The protein operates within cofactor biosynthesis; adenosylcobalamin biosynthesis; adenosylcobalamin from cob(II)yrinate a,c-diamide: step 7/7. Joins adenosylcobinamide-GDP and alpha-ribazole to generate adenosylcobalamin (Ado-cobalamin). Also synthesizes adenosylcobalamin 5'-phosphate from adenosylcobinamide-GDP and alpha-ribazole 5'-phosphate. The protein is Adenosylcobinamide-GDP ribazoletransferase of Salmonella newport (strain SL254).